Here is a 333-residue protein sequence, read N- to C-terminus: Fructose-1,6-bisphosphatase class 1 (333 aa).

Positions 90, 113, 115, and 116 each coordinate Mg(2+). Residues 116 to 119, N209, Y242, and K272 contribute to the substrate site; that span reads DGSS. Residue E278 participates in Mg(2+) binding.

This sequence belongs to the FBPase class 1 family. In terms of assembly, homotetramer. Requires Mg(2+) as cofactor.

The protein localises to the cytoplasm. It carries out the reaction beta-D-fructose 1,6-bisphosphate + H2O = beta-D-fructose 6-phosphate + phosphate. It participates in carbohydrate biosynthesis; gluconeogenesis. The protein is Fructose-1,6-bisphosphatase class 1 of Pasteurella multocida (strain Pm70).